Consider the following 120-residue polypeptide: Large ribosomal subunit protein bL12 (120 aa).

It belongs to the bacterial ribosomal protein bL12 family. In terms of assembly, homodimer. Part of the ribosomal stalk of the 50S ribosomal subunit. Forms a multimeric L10(L12)X complex, where L10 forms an elongated spine to which 2 to 4 L12 dimers bind in a sequential fashion. Binds GTP-bound translation factors.

Functionally, forms part of the ribosomal stalk which helps the ribosome interact with GTP-bound translation factors. Is thus essential for accurate translation. This is Large ribosomal subunit protein bL12 from Alkaliphilus metalliredigens (strain QYMF).